We begin with the raw amino-acid sequence, 340 residues long: 4-hydroxy-2-oxovalerate aldolase (340 aa).

In terms of domain architecture, Pyruvate carboxyltransferase spans 4 to 255; it reads VVIHDPTLRD…ATGIDLYALL (252 aa). 12-13 contacts substrate; the sequence is RD. Mn(2+) is bound at residue Asp13. Catalysis depends on His16, which acts as the Proton acceptor. Substrate contacts are provided by Ser166 and His194. Mn(2+)-binding residues include His194 and His196.

This sequence belongs to the 4-hydroxy-2-oxovalerate aldolase family.

It carries out the reaction (S)-4-hydroxy-2-oxopentanoate = acetaldehyde + pyruvate. The chain is 4-hydroxy-2-oxovalerate aldolase from Streptomyces griseus subsp. griseus (strain JCM 4626 / CBS 651.72 / NBRC 13350 / KCC S-0626 / ISP 5235).